Here is a 510-residue protein sequence, read N- to C-terminus: Crotonobetaine/carnitine--CoA ligase (510 aa).

It belongs to the ATP-dependent AMP-binding enzyme family.

It catalyses the reaction 4-(trimethylamino)butanoate + ATP + CoA = 4-(trimethylamino)butanoyl-CoA + AMP + diphosphate. The catalysed reaction is crotonobetaine + ATP + CoA = crotonobetainyl-CoA + AMP + diphosphate. It carries out the reaction (R)-carnitine + ATP + CoA = (R)-carnitinyl-CoA + AMP + diphosphate. It participates in amine and polyamine metabolism; carnitine metabolism. Catalyzes the transfer of CoA to carnitine, generating the initial carnitinyl-CoA needed for the CaiB reaction cycle. Also has activity toward crotonobetaine and gamma-butyrobetaine. In Shigella flexneri serotype 5b (strain 8401), this protein is Crotonobetaine/carnitine--CoA ligase.